The primary structure comprises 488 residues: 5'-3' exonuclease PLD3 (488 aa).

Residues 1–38 are Cytoplasmic-facing; the sequence is MKPKLMYQELKVPVEEPAGELPMNEIEAWKAAEKKARW. A helical; Signal-anchor for type II membrane protein transmembrane segment spans residues 39 to 59; it reads VLLVLILAVVGFGALMTQLFL. Residues 60-488 are Lumenal-facing; sequence WEYGDLHLFG…DSVGNACRLL (429 aa). Intrachain disulfides connect Cys77–Cys237 and Cys81–Cys235. N-linked (GlcNAc...) asparagine glycans are attached at residues Asn97 and Asn132. The PLD phosphodiesterase 1 domain occupies 194-221; that stretch reads THGVLHTKFWVVDQTHFYLGSANMDWRS. Residues His199, Lys201, and Asp206 contribute to the active site. His199 acts as the Proton donor in catalysis. Phosphate-binding residues include His199 and Lys201. Asn216 contacts phosphate. N-linked (GlcNAc...) asparagine glycosylation is found at Asn234, Asn282, and Asn385. A disulfide bridge connects residues Cys364 and Cys485. The 27-residue stretch at 409–435 folds into the PLD phosphodiesterase 2 domain; sequence YARVNHNKYMVTERTTYIGTSNWSGSY. Residue His414 coordinates phosphate. The active-site Nucleophile is His414. Phe436 lines the Mg(2+) pocket.

Belongs to the phospholipase D family. Homodimer. Interacts with APP. N-glycosylated. Post-translationally, proteolytically processed to a soluble form that is stable within endosomes and lysosomes. During transport through the secretory pathway becomes proteolysed by cysteine proteases, thereby releasing a stable soluble lysosomal lumenal polypeptide, whereas the transmembrane-bound fragment is rapidly degraded. Its transport route to lysosomes involves ubiquitination and the ESCRT complex. In terms of processing, ubiquitinated. Ubiquitination mediates sorting into lysosomes.

It localises to the endoplasmic reticulum membrane. Its subcellular location is the lysosome lumen. The protein localises to the early endosome membrane. The protein resides in the late endosome membrane. It is found in the golgi apparatus membrane. It localises to the endosome membrane. It catalyses the reaction Exonucleolytic cleavage in the 5'- to 3'-direction to yield nucleoside 3'-phosphates.. It carries out the reaction a 5'-end 5'-dephospho-ribonucleotidyl-ribonucleotide-RNA + H2O = a ribonucleoside 3'-phosphate + a 5'-end dephospho-ribonucleoside-RNA + H(+). The enzyme catalyses a ribonucleoside 3'-phosphate-2'-3'-cyclophospho-GMP + H2O = a ribonucleoside 3'-phosphate + 2',3'-cyclophospho-GMP + H(+). The catalysed reaction is a 5'-end 5'-dephospho-2'-deoxyribonucleotidyl-2'-deoxyribonucleotide in single-stranded DNA + H2O = a 5'-end dephospho-2'-deoxyribonucleoside in single-stranded DNA + a 2'-deoxyribonucleoside 3'-phosphate + H(+). It catalyses the reaction a 5'-end 5'-phospho-2'-deoxyribonucleotide in single-stranded DNA + H2O = a 5'-end 5'-dephospho-2'-deoxyribonucleotide in single-stranded DNA + phosphate. It carries out the reaction a 3-lyso-sn-glycero-1-phospho-(3'-acyl-1'-sn-glycerol) + a 1-acyl-sn-glycerol = a 3-acyl-sn-glycero-1-phospho-(3'-acyl-1'-sn-glycerol) + glycerol. The enzyme catalyses 3-lyso-sn-glycero-1-phospho-(3'-(9Z-octadecenoyl)-1'-sn-glycerol) + 1-(9Z-octadecenoyl)-sn-glycerol = 3-(9Z-octadecenoyl)-sn-glycero-1-phospho-(3'-(9Z-octadecenoyl)-1'-sn-glycerol) + glycerol. Its function is as follows. 5'-&gt;3' exonuclease that hydrolyzes the phosphodiester bond of single-stranded DNA (ssDNA) and RNA molecules to form nucleoside 3'-monophosphates and 5'-end 5'-hydroxy deoxyribonucleotide/ribonucleotide fragments. Partially redundant with PLD4, can cleave all four nucleotides displaying higher efficiency for ssDNA and RNA fragments initiated with uridine and guanosine residues and lower efficiency for cytidine-initiated substrates. As a result, it does not always degrade polynucleotides to the single nucleotide level, it can stall at specific sites sparing certain fragments from exonucleolytic degradation. Processes self and pathogenic ssDNA and RNA molecules that reach the endolysosomal compartment via phagocytosis or autophagy and may serve as 'danger' signals for recognition by innate immune receptors such as toll-like receptors (TLRs). Degrades mitochondrial CpG-rich ssDNA fragments to prevent TLR9 activation and autoinflammatory response, but it can cleave viral RNA to generate ligands for TLR7 activation and initiate antiviral immune responses. In plasmacytoid dendritic cells, it cooperates with endonuclease RNASET2 to release 2',3'-cyclic guanosine monophosphate (2',3'-cGMP), a potent stimulatory ligand for TLR7. Produces 2',3'-cGMPs and cytidine-rich RNA fragments that occupy TLR7 ligand-binding pockets and trigger a signaling-competent state. Can exert polynucleotide phosphatase activity toward 5'-phosphorylated ssDNA substrates although at a slow rate. Transphosphatidylase that catalyzes the exchange with R to S stereo-inversion of the glycerol moiety between (S,R)-lysophosphatidylglycerol (LPG) and monoacylglycerol (MAG) substrates to yield (S,S)-bis(monoacylglycero)phosphate (BMP). Can synthesize a variety of (S,S)-BMPs representing the main phospholipid constituent of lysosomal intralumenal vesicle (ILV) membranes that bind acid hydrolases for lipid degradation. Regulates the homeostasis and interorganellar communication of the endolysosomal system with an overall impact on cellular removal of dysfunctional organelles via autophagy as well as proper protein and lipid turnover. May play a role in myotube formation in response to ER stress. This Rattus norvegicus (Rat) protein is 5'-3' exonuclease PLD3 (Pld3).